A 243-amino-acid chain; its full sequence is 3-deoxy-manno-octulosonate cytidylyltransferase (243 aa).

It belongs to the KdsB family.

Its subcellular location is the cytoplasm. The enzyme catalyses 3-deoxy-alpha-D-manno-oct-2-ulosonate + CTP = CMP-3-deoxy-beta-D-manno-octulosonate + diphosphate. The protein operates within nucleotide-sugar biosynthesis; CMP-3-deoxy-D-manno-octulosonate biosynthesis; CMP-3-deoxy-D-manno-octulosonate from 3-deoxy-D-manno-octulosonate and CTP: step 1/1. It functions in the pathway bacterial outer membrane biogenesis; lipopolysaccharide biosynthesis. Activates KDO (a required 8-carbon sugar) for incorporation into bacterial lipopolysaccharide in Gram-negative bacteria. This Helicobacter acinonychis (strain Sheeba) protein is 3-deoxy-manno-octulosonate cytidylyltransferase.